The sequence spans 1160 residues: Pesticidal crystal protein Cry1Db (1160 aa).

Belongs to the delta endotoxin family.

In terms of biological role, promotes colloidosmotic lysis by binding to the midgut epithelial cells of insects. This Bacillus thuringiensis protein is Pesticidal crystal protein Cry1Db (cry1Db).